A 427-amino-acid polypeptide reads, in one-letter code: 3-phosphoshikimate 1-carboxyvinyltransferase (427 aa).

Positions 22, 23, and 27 each coordinate 3-phosphoshikimate. K22 provides a ligand contact to phosphoenolpyruvate. The phosphoenolpyruvate site is built by G96 and R124. Positions 169, 170, 171, 197, 313, 336, and 340 each coordinate 3-phosphoshikimate. Q171 provides a ligand contact to phosphoenolpyruvate. Residue D313 is the Proton acceptor of the active site. Phosphoenolpyruvate contacts are provided by R344, R386, and K411.

This sequence belongs to the EPSP synthase family. In terms of assembly, monomer.

It localises to the cytoplasm. The enzyme catalyses 3-phosphoshikimate + phosphoenolpyruvate = 5-O-(1-carboxyvinyl)-3-phosphoshikimate + phosphate. Its pathway is metabolic intermediate biosynthesis; chorismate biosynthesis; chorismate from D-erythrose 4-phosphate and phosphoenolpyruvate: step 6/7. Functionally, catalyzes the transfer of the enolpyruvyl moiety of phosphoenolpyruvate (PEP) to the 5-hydroxyl of shikimate-3-phosphate (S3P) to produce enolpyruvyl shikimate-3-phosphate and inorganic phosphate. The polypeptide is 3-phosphoshikimate 1-carboxyvinyltransferase (Klebsiella pneumoniae subsp. pneumoniae (strain ATCC 700721 / MGH 78578)).